Consider the following 405-residue polypeptide: S-adenosylmethionine synthase (405 aa).

Position 22 (H22) interacts with ATP. D24 lines the Mg(2+) pocket. A K(+)-binding site is contributed by E50. Positions 63 and 107 each coordinate L-methionine. Residues 107-117 (QSPDIAQGVDR) are flexible loop. Residues 184–186 (DGK), 250–251 (RF), D259, 265–266 (RK), A282, and K286 each bind ATP. D259 is a binding site for L-methionine. Position 290 (K290) interacts with L-methionine.

Belongs to the AdoMet synthase family. In terms of assembly, homotetramer; dimer of dimers. Requires Mg(2+) as cofactor. K(+) serves as cofactor.

It is found in the cytoplasm. The enzyme catalyses L-methionine + ATP + H2O = S-adenosyl-L-methionine + phosphate + diphosphate. It participates in amino-acid biosynthesis; S-adenosyl-L-methionine biosynthesis; S-adenosyl-L-methionine from L-methionine: step 1/1. In terms of biological role, catalyzes the formation of S-adenosylmethionine (AdoMet) from methionine and ATP. The overall synthetic reaction is composed of two sequential steps, AdoMet formation and the subsequent tripolyphosphate hydrolysis which occurs prior to release of AdoMet from the enzyme. The chain is S-adenosylmethionine synthase from Roseiflexus sp. (strain RS-1).